Here is a 1449-residue protein sequence, read N- to C-terminus: Gag-Pol polyprotein (1449 aa).

The N-myristoyl glycine; by host moiety is linked to residue G2. The segment at 7 to 31 (VLTGGKLDQWEAIYLRPGGKKKYRL) is interaction with Gp41. The interval 8–43 (LTGGKLDQWEAIYLRPGGKKKYRLKHLVWASRELER) is interaction with host CALM1. An interaction with host AP3D1 region spans residues 12 to 19 (KLDQWEAI). Residues 14-33 (DQWEAIYLRPGGKKKYRLKH) form an interaction with membrane phosphatidylinositol 4,5-bisphosphate and RNA region. The Nuclear export signal signature appears at 16–22 (WEAIYLR). Residues 26 to 32 (KKKYRLK) carry the Nuclear localization signal motif. The interaction with membrane phosphatidylinositol 4,5-bisphosphate stretch occupies residues 73-77 (EGLRS). Basic and acidic residues predominate over residues 105 to 119 (KEKQEQHKSEPKKPE). Residues 105-128 (KEKQEQHKSEPKKPEAGTAAAADS) form a disordered region. Position 134 is a phosphotyrosine; by host (Y134). The segment at 191 to 229 (NTVGGHQAAMQMLKEVINEEAAEWDRTHPAPVGPLPPGQ) is interaction with human PPIA/CYPA and NUP153. Positions 279 to 365 (YSPVSILEIK…GGPAHKARVL (87 aa)) are dimerization/Multimerization of capsid protein p24. 2 CCHC-type zinc fingers span residues 392–409 (IKCF…NCKA) and 413–430 (RGCW…DCKN). Positions 445 to 492 (QRETRKLPPDNNKERAHSPATRELWVSGGEEHTGKGDAGEPGEDRDLS) are disordered. 2 stretches are compositionally biased toward basic and acidic residues: residues 446-461 (RETR…ERAH) and 473-491 (GEEH…DRDL). Positions 499-503 (PQITL) are dimerization of protease. Positions 518-587 (REALLDTGAD…TPVNIIGRNF (70 aa)) constitute a Peptidase A2 domain. Residue D523 is the For protease activity; shared with dimeric partner of the active site. Dimerization of protease stretches follow at residues 547-553 (GIGGFIK) and 586-598 (NFLT…LNFP). One can recognise a Reverse transcriptase domain in the interval 641–831 (EGKISRIGPE…PPFLWMGYEL (191 aa)). Mg(2+) contacts are provided by D707, D782, and D783. The tract at residues 824-832 (FLWMGYELH) is RT 'primer grip'. A Tryptophan repeat motif motif is present at residues 995-1011 (WETWWTEHWQATWIPEW). The region spanning 1031–1154 (ISGAETYYVD…VDXLVSSGIR (124 aa)) is the RNase H type-1 domain. Mg(2+) contacts are provided by D1040, E1075, D1095, and D1146. The Integrase-type zinc finger occupies 1160–1201 (DGIEKAQEEHERYHSNWKAMASDFNLPPIVAKEIVASCDKCQ). Zn(2+) is bound by residues H1169, H1173, C1197, and C1200. In terms of domain architecture, Integrase catalytic spans 1211-1361 (INCSPGVWQL…TAGERIIDII (151 aa)). Mg(2+) contacts are provided by D1221, D1273, and E1309. The integrase-type DNA-binding region spans 1380-1427 (FXVYYRDSRDPIWKGPAKLLWKGEGAVVIQDNGDIKVVPRRKAKIIRD).

In terms of assembly, homotrimer; further assembles as hexamers of trimers. Interacts with gp41 (via C-terminus). Interacts with host CALM1; this interaction induces a conformational change in the Matrix protein, triggering exposure of the myristate group. Interacts with host AP3D1; this interaction allows the polyprotein trafficking to multivesicular bodies during virus assembly. Part of the pre-integration complex (PIC) which is composed of viral genome, matrix protein, Vpr and integrase. As to quaternary structure, homodimer; the homodimer further multimerizes as homohexamers or homopentamers. Interacts with human PPIA/CYPA; This interaction stabilizes the capsid. Interacts with human NUP153. Interacts with host PDZD8; this interaction stabilizes the capsid. Interacts with monkey TRIM5; this interaction destabilizes the capsid. Homodimer, whose active site consists of two apposed aspartic acid residues. In terms of assembly, heterodimer of p66 RT and p51 RT (RT p66/p51). Heterodimerization of RT is essential for DNA polymerase activity. The overall folding of the subdomains is similar in p66 RT and p51 RT but the spatial arrangements of the subdomains are dramatically different. As to quaternary structure, homotetramer; may further associate as a homohexadecamer. Part of the pre-integration complex (PIC) which is composed of viral genome, matrix protein, Vpr and integrase. Interacts with human SMARCB1/INI1 and human PSIP1/LEDGF isoform 1. Interacts with human KPNA3; this interaction might play a role in nuclear import of the pre-integration complex. Interacts with human NUP153; this interaction might play a role in nuclear import of the pre-integration complex. It depends on Mg(2+) as a cofactor. Specific enzymatic cleavages by the viral protease yield mature proteins. The protease is released by autocatalytic cleavage. The polyprotein is cleaved during and after budding, this process is termed maturation. Proteolytic cleavage of p66 RT removes the RNase H domain to yield the p51 RT subunit. Nucleocapsid protein p7 might be further cleaved after virus entry. Post-translationally, tyrosine phosphorylated presumably in the virion by a host kinase. Phosphorylation is apparently not a major regulator of membrane association. In terms of processing, phosphorylated possibly by host MAPK1; this phosphorylation is necessary for Pin1-mediated virion uncoating. Methylated by host PRMT6, impairing its function by reducing RNA annealing and the initiation of reverse transcription.

It localises to the host cell membrane. Its subcellular location is the host endosome. The protein resides in the host multivesicular body. It is found in the virion membrane. The protein localises to the host nucleus. It localises to the host cytoplasm. Its subcellular location is the virion. The enzyme catalyses Specific for a P1 residue that is hydrophobic, and P1' variable, but often Pro.. It carries out the reaction Endohydrolysis of RNA in RNA/DNA hybrids. Three different cleavage modes: 1. sequence-specific internal cleavage of RNA. Human immunodeficiency virus type 1 and Moloney murine leukemia virus enzymes prefer to cleave the RNA strand one nucleotide away from the RNA-DNA junction. 2. RNA 5'-end directed cleavage 13-19 nucleotides from the RNA end. 3. DNA 3'-end directed cleavage 15-20 nucleotides away from the primer terminus.. It catalyses the reaction 3'-end directed exonucleolytic cleavage of viral RNA-DNA hybrid.. The catalysed reaction is DNA(n) + a 2'-deoxyribonucleoside 5'-triphosphate = DNA(n+1) + diphosphate. Its activity is regulated as follows. Protease: The viral protease is inhibited by many synthetic protease inhibitors (PIs), such as amprenavir, atazanavir, indinavir, loprinavir, nelfinavir, ritonavir and saquinavir. Use of protease inhibitors in tritherapy regimens permit more ambitious therapeutic strategies. Reverse transcriptase/ribonuclease H: RT can be inhibited either by nucleoside RT inhibitors (NRTIs) or by non nucleoside RT inhibitors (NNRTIs). NRTIs act as chain terminators, whereas NNRTIs inhibit DNA polymerization by binding a small hydrophobic pocket near the RT active site and inducing an allosteric change in this region. Classical NRTIs are abacavir, adefovir (PMEA), didanosine (ddI), lamivudine (3TC), stavudine (d4T), tenofovir (PMPA), zalcitabine (ddC), and zidovudine (AZT). Classical NNRTIs are atevirdine (BHAP U-87201E), delavirdine, efavirenz (DMP-266), emivirine (I-EBU), and nevirapine (BI-RG-587). The tritherapies used as a basic effective treatment of AIDS associate two NRTIs and one NNRTI. Mediates, with Gag polyprotein, the essential events in virion assembly, including binding the plasma membrane, making the protein-protein interactions necessary to create spherical particles, recruiting the viral Env proteins, and packaging the genomic RNA via direct interactions with the RNA packaging sequence (Psi). Gag-Pol polyprotein may regulate its own translation, by the binding genomic RNA in the 5'-UTR. At low concentration, the polyprotein would promote translation, whereas at high concentration, the polyprotein would encapsidate genomic RNA and then shut off translation. In terms of biological role, targets the polyprotein to the plasma membrane via a multipartite membrane-binding signal, that includes its myristoylated N-terminus. Matrix protein is part of the pre-integration complex. Implicated in the release from host cell mediated by Vpu. Binds to RNA. Its function is as follows. Forms the conical core that encapsulates the genomic RNA-nucleocapsid complex in the virion. Most core are conical, with only 7% tubular. The core is constituted by capsid protein hexamer subunits. The core is disassembled soon after virion entry. Host restriction factors such as TRIM5-alpha or TRIMCyp bind retroviral capsids and cause premature capsid disassembly, leading to blocks in reverse transcription. Capsid restriction by TRIM5 is one of the factors which restricts HIV-1 to the human species. Host PIN1 apparently facilitates the virion uncoating. On the other hand, interactions with PDZD8 or CYPA stabilize the capsid. Functionally, encapsulates and protects viral dimeric unspliced genomic RNA (gRNA). Binds these RNAs through its zinc fingers. Acts as a nucleic acid chaperone which is involved in rearangement of nucleic acid secondary structure during gRNA retrotranscription. Also facilitates template switch leading to recombination. As part of the polyprotein, participates in gRNA dimerization, packaging, tRNA incorporation and virion assembly. Aspartyl protease that mediates proteolytic cleavages of Gag and Gag-Pol polyproteins during or shortly after the release of the virion from the plasma membrane. Cleavages take place as an ordered, step-wise cascade to yield mature proteins. This process is called maturation. Displays maximal activity during the budding process just prior to particle release from the cell. Also cleaves Nef and Vif, probably concomitantly with viral structural proteins on maturation of virus particles. Hydrolyzes host EIF4GI and PABP1 in order to shut off the capped cellular mRNA translation. The resulting inhibition of cellular protein synthesis serves to ensure maximal viral gene expression and to evade host immune response. Also mediates cleavage of host YTHDF3. Mediates cleavage of host CARD8, thereby activating the CARD8 inflammasome, leading to the clearance of latent HIV-1 in patient CD4(+) T-cells after viral reactivation; in contrast, HIV-1 can evade CARD8-sensing when its protease remains inactive in infected cells prior to viral budding. In terms of biological role, multifunctional enzyme that converts the viral RNA genome into dsDNA in the cytoplasm, shortly after virus entry into the cell. This enzyme displays a DNA polymerase activity that can copy either DNA or RNA templates, and a ribonuclease H (RNase H) activity that cleaves the RNA strand of RNA-DNA heteroduplexes in a partially processive 3' to 5' endonucleasic mode. Conversion of viral genomic RNA into dsDNA requires many steps. A tRNA(3)-Lys binds to the primer-binding site (PBS) situated at the 5'-end of the viral RNA. RT uses the 3' end of the tRNA primer to perform a short round of RNA-dependent minus-strand DNA synthesis. The reading proceeds through the U5 region and ends after the repeated (R) region which is present at both ends of viral RNA. The portion of the RNA-DNA heteroduplex is digested by the RNase H, resulting in a ssDNA product attached to the tRNA primer. This ssDNA/tRNA hybridizes with the identical R region situated at the 3' end of viral RNA. This template exchange, known as minus-strand DNA strong stop transfer, can be either intra- or intermolecular. RT uses the 3' end of this newly synthesized short ssDNA to perform the RNA-dependent minus-strand DNA synthesis of the whole template. RNase H digests the RNA template except for two polypurine tracts (PPTs) situated at the 5'-end and near the center of the genome. It is not clear if both polymerase and RNase H activities are simultaneous. RNase H probably can proceed both in a polymerase-dependent (RNA cut into small fragments by the same RT performing DNA synthesis) and a polymerase-independent mode (cleavage of remaining RNA fragments by free RTs). Secondly, RT performs DNA-directed plus-strand DNA synthesis using the PPTs that have not been removed by RNase H as primers. PPTs and tRNA primers are then removed by RNase H. The 3' and 5' ssDNA PBS regions hybridize to form a circular dsDNA intermediate. Strand displacement synthesis by RT to the PBS and PPT ends produces a blunt ended, linear dsDNA copy of the viral genome that includes long terminal repeats (LTRs) at both ends. Its function is as follows. Catalyzes viral DNA integration into the host chromosome, by performing a series of DNA cutting and joining reactions. This enzyme activity takes place after virion entry into a cell and reverse transcription of the RNA genome in dsDNA. The first step in the integration process is 3' processing. This step requires a complex comprising the viral genome, matrix protein, Vpr and integrase. This complex is called the pre-integration complex (PIC). The integrase protein removes 2 nucleotides from each 3' end of the viral DNA, leaving recessed CA OH's at the 3' ends. In the second step, the PIC enters cell nucleus. This process is mediated through integrase and Vpr proteins, and allows the virus to infect a non dividing cell. This ability to enter the nucleus is specific of lentiviruses, other retroviruses cannot and rely on cell division to access cell chromosomes. In the third step, termed strand transfer, the integrase protein joins the previously processed 3' ends to the 5' ends of strands of target cellular DNA at the site of integration. The 5'-ends are produced by integrase-catalyzed staggered cuts, 5 bp apart. A Y-shaped, gapped, recombination intermediate results, with the 5'-ends of the viral DNA strands and the 3' ends of target DNA strands remaining unjoined, flanking a gap of 5 bp. The last step is viral DNA integration into host chromosome. This involves host DNA repair synthesis in which the 5 bp gaps between the unjoined strands are filled in and then ligated. Since this process occurs at both cuts flanking the HIV genome, a 5 bp duplication of host DNA is produced at the ends of HIV-1 integration. Alternatively, Integrase may catalyze the excision of viral DNA just after strand transfer, this is termed disintegration. The chain is Gag-Pol polyprotein (gag-pol) from Human immunodeficiency virus type 1 group N (isolate YBF106) (HIV-1).